The chain runs to 95 residues: Putative regulatory protein STH1338 (95 aa).

It belongs to the RemA family.

This chain is Putative regulatory protein STH1338, found in Symbiobacterium thermophilum (strain DSM 24528 / JCM 14929 / IAM 14863 / T).